The chain runs to 570 residues: Glutamate--tRNA ligase (570 aa).

A 'HIGH' region motif is present at residues 105 to 115 (PNPDGAFHLGN).

This sequence belongs to the class-I aminoacyl-tRNA synthetase family. Glutamate--tRNA ligase type 2 subfamily.

It is found in the cytoplasm. It carries out the reaction tRNA(Glu) + L-glutamate + ATP = L-glutamyl-tRNA(Glu) + AMP + diphosphate. Its function is as follows. Catalyzes the attachment of glutamate to tRNA(Glu) in a two-step reaction: glutamate is first activated by ATP to form Glu-AMP and then transferred to the acceptor end of tRNA(Glu). This chain is Glutamate--tRNA ligase, found in Pyrococcus horikoshii (strain ATCC 700860 / DSM 12428 / JCM 9974 / NBRC 100139 / OT-3).